Reading from the N-terminus, the 122-residue chain is MRKSYRVKSEKDFQQVFESGNSVANRAFVIYKVEKPENKHFRVGISVGKKVGHTAVARNRLKRYIRAVIDEEKLEIDPQVDFLIITRPYARNFDMVKVRKNLLHALALAHIIEEMPDEVEEN.

The protein belongs to the RnpA family. Consists of a catalytic RNA component (M1 or rnpB) and a protein subunit.

The catalysed reaction is Endonucleolytic cleavage of RNA, removing 5'-extranucleotides from tRNA precursor.. Its function is as follows. RNaseP catalyzes the removal of the 5'-leader sequence from pre-tRNA to produce the mature 5'-terminus. It can also cleave other RNA substrates such as 4.5S RNA. The protein component plays an auxiliary but essential role in vivo by binding to the 5'-leader sequence and broadening the substrate specificity of the ribozyme. This is Ribonuclease P protein component from Lactobacillus helveticus (strain DPC 4571).